A 1935-amino-acid polypeptide reads, in one-letter code: Myosin-7 (1935 aa).

The region spanning 32–81 is the Myosin N-terminal SH3-like domain; the sequence is DLKKDVFVPDDKEEFVKATILSREGGKVTAETEHGKTVTVKEDQVLQQNP. Residues 85 to 778 enclose the Myosin motor domain; it reads DKIEDMAMLT…LLGLLEEMRD (694 aa). Lys-129 is subject to N6,N6,N6-trimethyllysine. 178 to 185 serves as a coordination point for ATP; it reads GESGAGKT. Thr-378 carries the phosphothreonine modification. Actin-binding regions lie at residues 655 to 677 and 757 to 771; these read LNKL…IPNE and KFGH…GLLG. Residues 781 to 810 enclose the IQ domain; it reads LSRIITRIQAQSRGVLSRMEFKKLLERRDS. The stretch at 839-1935 forms a coiled coil; the sequence is LLKSAETEKE…DIGTKGLNEE (1097 aa). A phosphoserine mark is found at Ser-1137 and Ser-1269. Phosphothreonine is present on Thr-1282. Position 1308 is a phosphotyrosine (Tyr-1308). Phosphothreonine is present on Thr-1309. Ser-1510 is modified (phosphoserine). Thr-1513 carries the post-translational modification Phosphothreonine. The segment at 1907-1935 is disordered; it reads EERADIAESQVNKLRAKSRDIGTKGLNEE. Residues 1923 to 1935 show a composition bias toward basic and acidic residues; it reads KSRDIGTKGLNEE.

Belongs to the TRAFAC class myosin-kinesin ATPase superfamily. Myosin family. Muscle myosin is a hexameric protein that consists of 2 heavy chain subunits (MHC), 2 alkali light chain subunits (MLC) and 2 regulatory light chain subunits (MLC-2). Interacts with ECPAS. Interacts (via C-terminus) with LRRC39.

Its subcellular location is the cytoplasm. The protein resides in the myofibril. It localises to the sarcomere. Myosins are actin-based motor molecules with ATPase activity essential for muscle contraction. Forms regular bipolar thick filaments that, together with actin thin filaments, constitute the fundamental contractile unit of skeletal and cardiac muscle. This Bos taurus (Bovine) protein is Myosin-7 (MYH7).